Here is a 409-residue protein sequence, read N- to C-terminus: MKRQNVRTLALIVCTFTYLLVGAAVFDALESEPEMIERQRLELRQLELRARYNLSEGGYEELERVVLRLKPHKAGVQWRFAGSFYFAITVITTIGYGHAAPSTDGGKVFCMFYALLGIPLTLVMFQSLGERINTFVRYLLHRAKRGLGMRHAEVSMANMVLIGFVSCISTLCIGAAAFSYYERWTFFQAYYYCFITLTTIGFGDYVALQKDQALQTQPQYVAFSFVYILTGLTVIGAFLNLVVLRFMTMNAEDEKRDAEHRALLTHNGQAVGLGGLSCLSGSLGDGVRPRDPVTCAAAAGGVGVGVGGSGFRNVYAEVLHFQSMCSCLWYKSREKLQYSIPMIIPRDLSTSDTCVEHSHSSPGGGGRYSDTPSHPCLCSGTQRSAISSVSTGLHSLAAFRGLMKRRSSV.

The Cytoplasmic segment spans residues 1–8; it reads MKRQNVRT. Residues 9–29 form a helical membrane-spanning segment; that stretch reads LALIVCTFTYLLVGAAVFDAL. Asn-53 is a glycosylation site (N-linked (GlcNAc...) asparagine). Positions 78 to 101 form an intramembrane region, pore-forming; that stretch reads WRFAGSFYFAITVITTIGYGHAAP. A helical transmembrane segment spans residues 108-128; sequence VFCMFYALLGIPLTLVMFQSL. The Cytoplasmic portion of the chain corresponds to 129–158; sequence GERINTFVRYLLHRAKRGLGMRHAEVSMAN. The chain crosses the membrane as a helical span at residues 159–179; sequence MVLIGFVSCISTLCIGAAAFS. An intramembrane region (pore-forming) is located at residues 184–207; sequence WTFFQAYYYCFITLTTIGFGDYVA. A helical membrane pass occupies residues 223-243; sequence FSFVYILTGLTVIGAFLNLVV. Residues 244-409 lie on the Cytoplasmic side of the membrane; the sequence is LRFMTMNAED…RGLMKRRSSV (166 aa).

It belongs to the two pore domain potassium channel (TC 1.A.1.8) family. As to quaternary structure, homodimer. Heterodimer with KCNK1. Heterodimer with KCNK9. As to expression, very strong expression in heart, also detected in kidney, brain, skin, testis, lung, skeletal muscle, small intestine and stomach. Not detected in liver, thymus or spleen. Expressed in adrenal glands mainly in zona glomerulosa and zona fasciculata of the cortex. Expressed at higher levels in brown and beige than in white adipocytes.

It is found in the cell membrane. The catalysed reaction is K(+)(in) = K(+)(out). The enzyme catalyses Na(+)(in) = Na(+)(out). Its activity is regulated as follows. Activated by halothane and isoflurane. Inhibited by external acidification, diacylglycerol and anandamide. Inactivated by barium. K(+) channel that conducts voltage-dependent outward rectifying currents upon membrane depolarization. Voltage sensing is coupled to K(+) electrochemical gradient in an 'ion flux gating' mode where outward but not inward ion flow opens the gate. Changes ion selectivity and becomes permeable to Na(+) ions in response to extracellular acidification. Protonation of the pH sensor His-98 stabilizes C-type inactivation conformation likely converting the channel from outward K(+)-conducting, to inward Na(+)-conducting to nonconductive state. Homo- and heterodimerizes to form functional channels with distinct regulatory and gating properties. Allows K(+) currents with fast-gating kinetics important for the repolarization and hyperpolarization phases of action potentials. In cerebellar granule cells, heteromeric KCNK3:KCNK9 channel may hyperpolarize the resting membrane potential to limit intrinsic neuronal excitability, but once the action potential threshold is reached, it may support high-frequency action potential firing and increased neuronal excitability. Dispensable for central chemosensory respiration i.e. breathing controlled by brainstem CO2/pH, it rather conducts pH-sensitive currents and controls the firing rate of serotonergic raphe neurons involved in potentiation of the respiratory chemoreflex. Additionally, imparts chemosensitivity to type 1 cells in carotid bodies which respond to a decrease in arterial oxygen pressure or an increase in carbon dioxide pressure or pH to initiate adaptive changes in pulmonary ventilation. In adrenal gland, contributes to the maintenance of a hyperpolarized resting membrane potential of aldosterone-producing cells at zona glomerulosa and limits aldosterone release as part of a regulatory mechanism that controls arterial blood pressure and electrolyte homeostasis. In brown adipocytes, mediates K(+) efflux that counteracts norepinephrine-induced membrane depolarization, limits Ca(2+) efflux and downstream cAMP and PKA signaling, ultimately attenuating lipid oxidation and adaptive thermogenesis. This is Potassium channel subfamily K member 3 from Mus musculus (Mouse).